The following is a 295-amino-acid chain: MAMGTHFGGLWLALLCMVSATMGAVPRKPVDVPFGRNYVPTWAFDHIKYFNGGSQIQLSLDKYTGTGFQSKGSYLFGHFSMQIKMVPGDSAGTVTAFYLSSQNSEHDEIDFEFLGNRTGQPYILQTNVFTGGKGDREQRIFLWFDPTKEYHSYSVLWNLFLIIFFVDDVPIRVFKNSKDLGVRFPFDQPMKIYSSLWNADDWATRGGLEKTDWSKAPFVASYRSFHVDGCEASVNAKFCDTQGKRWWDQKEFQDLDSFQYRRLRWVRSKYTIYNYCTDRKRYPVMPPECKRDRDI.

The N-terminal stretch at methionine 1–glycine 23 is a signal peptide. Residues alanine 24–tyrosine 222 form the GH16 domain. Residue glutamate 108 is the Nucleophile of the active site. Residue glutamate 112 is the Proton donor of the active site. A xyloglucan-binding site is contributed by glutamate 112. Asparagine 116 carries an N-linked (GlcNAc...) asparagine glycan. Xyloglucan-binding positions include glutamine 125–asparagine 127, aspartate 135–glutamate 137, aspartate 201–tryptophan 202, and glycine 206. 2 disulfides stabilise this stretch: cysteine 230-cysteine 239 and cysteine 276-cysteine 289. Xyloglucan is bound at residue arginine 281.

Belongs to the glycosyl hydrolase 16 family. XTH group 1 subfamily. Post-translationally, contains at least one intrachain disulfide bond essential for its enzymatic activity. As to expression, expressed in fruit pulp.

Its subcellular location is the secreted. It localises to the cell wall. The protein resides in the extracellular space. The protein localises to the apoplast. It carries out the reaction breaks a beta-(1-&gt;4) bond in the backbone of a xyloglucan and transfers the xyloglucanyl segment on to O-4 of the non-reducing terminal glucose residue of an acceptor, which can be a xyloglucan or an oligosaccharide of xyloglucan.. Its function is as follows. Catalyzes xyloglucan endotransglycosylation (XET). Cleaves and religates xyloglucan polymers. Does not catalyze xyloglucan endohydrolysis (XEH). Probably involved in cell wall restructuring during fruit ripening and postharvest fruit softening. This chain is Xyloglucan endotransglucosylase protein 2, found in Diospyros kaki (Kaki persimmon).